The primary structure comprises 88 residues: uncharacterized protein (88 aa).

2 consecutive transmembrane segments (helical) span residues 5–25 and 36–56; these read AIPF…LLFV and CYYL…VMIF.

Its subcellular location is the membrane. This is an uncharacterized protein from Saccharomyces cerevisiae (strain ATCC 204508 / S288c) (Baker's yeast).